We begin with the raw amino-acid sequence, 238 residues long: Large ribosomal subunit protein uL1 (238 aa).

Belongs to the universal ribosomal protein uL1 family. As to quaternary structure, part of the 50S ribosomal subunit.

Functionally, binds directly to 23S rRNA. The L1 stalk is quite mobile in the ribosome, and is involved in E site tRNA release. Its function is as follows. Protein L1 is also a translational repressor protein, it controls the translation of the L11 operon by binding to its mRNA. This Picosynechococcus sp. (strain ATCC 27264 / PCC 7002 / PR-6) (Agmenellum quadruplicatum) protein is Large ribosomal subunit protein uL1.